The sequence spans 434 residues: Glutamate-1-semialdehyde 2,1-aminomutase 1 (434 aa).

At Lys-270 the chain carries N6-(pyridoxal phosphate)lysine.

This sequence belongs to the class-III pyridoxal-phosphate-dependent aminotransferase family. HemL subfamily. As to quaternary structure, homodimer. Pyridoxal 5'-phosphate is required as a cofactor.

Its subcellular location is the cytoplasm. It carries out the reaction (S)-4-amino-5-oxopentanoate = 5-aminolevulinate. It participates in porphyrin-containing compound metabolism; protoporphyrin-IX biosynthesis; 5-aminolevulinate from L-glutamyl-tRNA(Glu): step 2/2. The polypeptide is Glutamate-1-semialdehyde 2,1-aminomutase 1 (Bacillus cereus (strain ATCC 10987 / NRS 248)).